The chain runs to 293 residues: Phosphate-binding protein PstS 2 (293 aa).

The N-terminal stretch at 1 to 23 is a signal peptide; it reads MKKHKMLSLLAVSGLMGIGILAG. C24 carries N-palmitoyl cysteine lipidation. C24 is lipidated: S-diacylglycerol cysteine.

The protein belongs to the PstS family. As to quaternary structure, the complex is composed of two ATP-binding proteins (PstB), two transmembrane proteins (PstC and PstA) and a solute-binding protein (PstS).

The protein localises to the cell membrane. Its function is as follows. Part of the ABC transporter complex PstSACB involved in phosphate import. The chain is Phosphate-binding protein PstS 2 (pstS2) from Streptococcus agalactiae serotype III (strain NEM316).